Consider the following 352-residue polypeptide: Anthranilate phosphoribosyltransferase (352 aa).

Residues Gly83, 86–87, Thr91, 93–96, 111–119, and Ala123 contribute to the 5-phospho-alpha-D-ribose 1-diphosphate site; these read GD, NIST, and KHGGRSVSS. Gly83 lines the anthranilate pocket. Ser95 is a Mg(2+) binding site. Arg169 provides a ligand contact to anthranilate. 2 residues coordinate Mg(2+): Asp228 and Glu229.

Belongs to the anthranilate phosphoribosyltransferase family. As to quaternary structure, homodimer. Mg(2+) is required as a cofactor.

The catalysed reaction is N-(5-phospho-beta-D-ribosyl)anthranilate + diphosphate = 5-phospho-alpha-D-ribose 1-diphosphate + anthranilate. It functions in the pathway amino-acid biosynthesis; L-tryptophan biosynthesis; L-tryptophan from chorismate: step 2/5. Catalyzes the transfer of the phosphoribosyl group of 5-phosphorylribose-1-pyrophosphate (PRPP) to anthranilate to yield N-(5'-phosphoribosyl)-anthranilate (PRA). This is Anthranilate phosphoribosyltransferase from Neisseria meningitidis serogroup A / serotype 4A (strain DSM 15465 / Z2491).